The chain runs to 203 residues: MQILLATVAAYLIGSVSFAVVVSAAMGLADPRSYGSKNPGATNVLRSGNKKAAILTLVGDAFKGWLAVWLVKRFGIGGEIGVALAAIAVFLGHLYPVFFRFQGGKGVATAAGVLLAVHPVLGLATALTWLIVAFFFRYSSLAALVAAVFAPIFDVFLFGTHDNPVAWAVLAMSVLLIWRHRSNISKLLAGEESRIGQKKKTGA.

A run of 6 helical transmembrane segments spans residues 3-23, 51-71, 74-94, 116-136, 140-160, and 164-178; these read ILLATVAAYLIGSVSFAVVVS, KAAILTLVGDAFKGWLAVWLV, FGIGGEIGVALAAIAVFLGHL, AVHPVLGLATALTWLIVAFFF, SLAALVAAVFAPIFDVFLFGT, and PVAWAVLAMSVLLIW.

It belongs to the PlsY family. Probably interacts with PlsX.

The protein resides in the cell inner membrane. It carries out the reaction an acyl phosphate + sn-glycerol 3-phosphate = a 1-acyl-sn-glycero-3-phosphate + phosphate. The protein operates within lipid metabolism; phospholipid metabolism. Catalyzes the transfer of an acyl group from acyl-phosphate (acyl-PO(4)) to glycerol-3-phosphate (G3P) to form lysophosphatidic acid (LPA). This enzyme utilizes acyl-phosphate as fatty acyl donor, but not acyl-CoA or acyl-ACP. In Burkholderia pseudomallei (strain 1710b), this protein is Glycerol-3-phosphate acyltransferase.